The following is a 155-amino-acid chain: Ribosome maturation factor RimP (155 aa).

This sequence belongs to the RimP family.

The protein localises to the cytoplasm. Functionally, required for maturation of 30S ribosomal subunits. In Parasynechococcus marenigrum (strain WH8102), this protein is Ribosome maturation factor RimP.